Here is a 294-residue protein sequence, read N- to C-terminus: Potassium-transporting ATPase subunit beta (294 aa).

The Cytoplasmic segment spans residues 1-36 (MAALQEKKSCSQRMAEFRHYCWNPDTGQMLGRTPAR). Residues 37-57 (WVWISLYYAGFYVVMTGLFAL) traverse the membrane as a helical; Signal-anchor for type II membrane protein segment. Residues 58–294 (CIYVLMQTID…KVEFKLTIQK (237 aa)) are Extracellular-facing. N-linked (GlcNAc...) asparagine glycans are attached at residues N99, N103, N130, N146, and N161. An intrachain disulfide couples C131 to C152. A disulfide bond links C162 and C178. N-linked (GlcNAc...) asparagine glycosylation is found at N193 and N225. The tract at residues 194-294 (NTAPRVDCTF…KVEFKLTIQK (101 aa)) is immunoglobulin-like. An intrachain disulfide couples C201 to C266.

It belongs to the X(+)/potassium ATPases subunit beta family. The ATPase pump is composed of two subunits: alpha (catalytic) and beta (regulatory). Interacts with alpha subunit ATP12A; this interaction is required for the formation of a functionally active pump and targeting at the plasma membrane. Interacts (via N-terminus) with alpha subunit ATP4A (via the P-domain). In terms of processing, N-glycosylation is necessary for assembly and functional expression of the pump at the plasma membrane. Expressed in parietal cells (at protein level).

It localises to the apical cell membrane. The protein resides in the cell membrane. The beta subunit of the gastric H(+)/K(+) ATPase pump which transports H(+) ions in exchange for K(+) ions across the apical membrane of parietal cells. Plays a structural and regulatory role in the assembly and membrane targeting of a functionally active pump. Within a transport cycle, the transfer of a H(+) ion across the membrane is coupled to ATP hydrolysis and is associated with a transient phosphorylation of the alpha subunit that shifts the pump conformation from inward-facing (E1) to outward-facing state (E2). Interacts with the phosphorylation domain of the alpha subunit and functions as a ratchet, stabilizing the lumenal-open E2 conformation and preventing the reverse reaction of the transport cycle. This chain is Potassium-transporting ATPase subunit beta (Atp4b), found in Mus musculus (Mouse).